The sequence spans 100 residues: Aspartyl/glutamyl-tRNA(Asn/Gln) amidotransferase subunit C (100 aa).

It belongs to the GatC family. As to quaternary structure, heterotrimer of A, B and C subunits.

It catalyses the reaction L-glutamyl-tRNA(Gln) + L-glutamine + ATP + H2O = L-glutaminyl-tRNA(Gln) + L-glutamate + ADP + phosphate + H(+). The enzyme catalyses L-aspartyl-tRNA(Asn) + L-glutamine + ATP + H2O = L-asparaginyl-tRNA(Asn) + L-glutamate + ADP + phosphate + 2 H(+). Allows the formation of correctly charged Asn-tRNA(Asn) or Gln-tRNA(Gln) through the transamidation of misacylated Asp-tRNA(Asn) or Glu-tRNA(Gln) in organisms which lack either or both of asparaginyl-tRNA or glutaminyl-tRNA synthetases. The reaction takes place in the presence of glutamine and ATP through an activated phospho-Asp-tRNA(Asn) or phospho-Glu-tRNA(Gln). The polypeptide is Aspartyl/glutamyl-tRNA(Asn/Gln) amidotransferase subunit C (Rickettsia typhi (strain ATCC VR-144 / Wilmington)).